We begin with the raw amino-acid sequence, 128 residues long: Small ribosomal subunit protein eS8 (128 aa).

This sequence belongs to the eukaryotic ribosomal protein eS8 family. In terms of assembly, part of the 30S ribosomal subunit.

The chain is Small ribosomal subunit protein eS8 from Methanococcus maripaludis (strain C6 / ATCC BAA-1332).